Here is a 596-residue protein sequence, read N- to C-terminus: Elongation factor 4 (596 aa).

Positions 2–184 (KHIRNFSIIA…VIVEQIPPPE (183 aa)) constitute a tr-type G domain. GTP-binding positions include 14-19 (DHGKST) and 131-134 (NKID).

The protein belongs to the TRAFAC class translation factor GTPase superfamily. Classic translation factor GTPase family. LepA subfamily.

The protein localises to the cell inner membrane. It carries out the reaction GTP + H2O = GDP + phosphate + H(+). Required for accurate and efficient protein synthesis under certain stress conditions. May act as a fidelity factor of the translation reaction, by catalyzing a one-codon backward translocation of tRNAs on improperly translocated ribosomes. Back-translocation proceeds from a post-translocation (POST) complex to a pre-translocation (PRE) complex, thus giving elongation factor G a second chance to translocate the tRNAs correctly. Binds to ribosomes in a GTP-dependent manner. This Shewanella piezotolerans (strain WP3 / JCM 13877) protein is Elongation factor 4.